Reading from the N-terminus, the 1099-residue chain is Carbamoyl phosphate synthase large chain (1099 aa).

Residues 1-402 form a carboxyphosphate synthetic domain region; the sequence is MPKREDIKRI…ALGKALRSLE (402 aa). Residues arginine 129, arginine 169, glycine 175, glycine 176, glutamate 208, valine 210, glutamate 215, glycine 241, isoleucine 242, histidine 243, glutamine 285, and glutamate 299 each contribute to the ATP site. Residues 133–328 form the ATP-grasp 1 domain; that stretch reads KETMEKAGLE…IAKVAALLAV (196 aa). Residues glutamine 285, glutamate 299, and asparagine 301 each contribute to the Mg(2+) site. Positions 285, 299, and 301 each coordinate Mn(2+). The interval 403-541 is oligomerization domain; the sequence is LDAAPKLDLE…STYNGVENEA (139 aa). Residues 542–944 form a carbamoyl phosphate synthetic domain region; that stretch reads VPSDREKIMI…AFAKAQIAAG (403 aa). The ATP-grasp 2 domain maps to 666–857; sequence AKLLKQIGLK…VARIAAKIMV (192 aa). Residues arginine 702, lysine 741, leucine 743, glutamate 748, glycine 773, valine 774, histidine 775, serine 776, glutamine 816, and glutamate 828 each contribute to the ATP site. Positions 816, 828, and 830 each coordinate Mg(2+). Residues glutamine 816, glutamate 828, and asparagine 830 each coordinate Mn(2+). Positions 945–1099 constitute an MGS-like domain; that stretch reads NPLPTTGAIL…VRRLTDTWKM (155 aa). An allosteric domain region spans residues 945-1099; the sequence is NPLPTTGAIL…VRRLTDTWKM (155 aa).

This sequence belongs to the CarB family. In terms of assembly, composed of two chains; the small (or glutamine) chain promotes the hydrolysis of glutamine to ammonia, which is used by the large (or ammonia) chain to synthesize carbamoyl phosphate. Tetramer of heterodimers (alpha,beta)4. The cofactor is Mg(2+). It depends on Mn(2+) as a cofactor.

The catalysed reaction is hydrogencarbonate + L-glutamine + 2 ATP + H2O = carbamoyl phosphate + L-glutamate + 2 ADP + phosphate + 2 H(+). It carries out the reaction hydrogencarbonate + NH4(+) + 2 ATP = carbamoyl phosphate + 2 ADP + phosphate + 2 H(+). The protein operates within amino-acid biosynthesis; L-arginine biosynthesis; carbamoyl phosphate from bicarbonate: step 1/1. It participates in pyrimidine metabolism; UMP biosynthesis via de novo pathway; (S)-dihydroorotate from bicarbonate: step 1/3. Its function is as follows. Large subunit of the glutamine-dependent carbamoyl phosphate synthetase (CPSase). CPSase catalyzes the formation of carbamoyl phosphate from the ammonia moiety of glutamine, carbonate, and phosphate donated by ATP, constituting the first step of 2 biosynthetic pathways, one leading to arginine and/or urea and the other to pyrimidine nucleotides. The large subunit (synthetase) binds the substrates ammonia (free or transferred from glutamine from the small subunit), hydrogencarbonate and ATP and carries out an ATP-coupled ligase reaction, activating hydrogencarbonate by forming carboxy phosphate which reacts with ammonia to form carbamoyl phosphate. This chain is Carbamoyl phosphate synthase large chain, found in Thermotoga sp. (strain RQ2).